Reading from the N-terminus, the 114-residue chain is Flagellar hook-basal body complex protein FliE (114 aa).

This sequence belongs to the FliE family.

It localises to the bacterial flagellum basal body. This Burkholderia cenocepacia (strain ATCC BAA-245 / DSM 16553 / LMG 16656 / NCTC 13227 / J2315 / CF5610) (Burkholderia cepacia (strain J2315)) protein is Flagellar hook-basal body complex protein FliE.